Consider the following 150-residue polypeptide: Macrodomain Ter protein (150 aa).

The protein belongs to the MatP family. Homodimer.

Its subcellular location is the cytoplasm. Its function is as follows. Required for spatial organization of the terminus region of the chromosome (Ter macrodomain) during the cell cycle. Prevents early segregation of duplicated Ter macrodomains during cell division. Binds specifically to matS, which is a 13 bp signature motif repeated within the Ter macrodomain. This Shigella dysenteriae serotype 1 (strain Sd197) protein is Macrodomain Ter protein.